A 159-amino-acid polypeptide reads, in one-letter code: Small ribosomal subunit protein uS9 (159 aa).

It belongs to the universal ribosomal protein uS9 family.

This chain is Small ribosomal subunit protein uS9, found in Beijerinckia indica subsp. indica (strain ATCC 9039 / DSM 1715 / NCIMB 8712).